An 88-amino-acid chain; its full sequence is Small ribosomal subunit protein bS20 (88 aa).

A compositionally biased stretch (basic residues) spans Met1–Asn21. Positions Met1–Ser26 are disordered.

The protein belongs to the bacterial ribosomal protein bS20 family.

In terms of biological role, binds directly to 16S ribosomal RNA. This is Small ribosomal subunit protein bS20 from Shewanella halifaxensis (strain HAW-EB4).